Reading from the N-terminus, the 479-residue chain is Ribosomal RNA small subunit methyltransferase F (479 aa).

Residues 125 to 131 (AAAPGSK), Glu149, Asp176, and Asp194 each bind S-adenosyl-L-methionine. Residue Cys247 is the Nucleophile of the active site.

This sequence belongs to the class I-like SAM-binding methyltransferase superfamily. RsmB/NOP family.

The protein resides in the cytoplasm. It carries out the reaction cytidine(1407) in 16S rRNA + S-adenosyl-L-methionine = 5-methylcytidine(1407) in 16S rRNA + S-adenosyl-L-homocysteine + H(+). Its function is as follows. Specifically methylates the cytosine at position 1407 (m5C1407) of 16S rRNA. In Salmonella agona (strain SL483), this protein is Ribosomal RNA small subunit methyltransferase F.